The primary structure comprises 723 residues: Fatty acid oxidation complex subunit alpha (723 aa).

An enoyl-CoA hydratase/isomerase region spans residues Met1 to Asp189. Asp296 lines the substrate pocket. The segment at Asn311–Ile723 is 3-hydroxyacyl-CoA dehydrogenase. NAD(+)-binding positions include Met325, Asp344, Val401–Glu403, Lys408, and Ser430. The active-site For 3-hydroxyacyl-CoA dehydrogenase activity is the His451. Asn454 provides a ligand contact to NAD(+). Residues Asn501 and Tyr661 each contribute to the substrate site.

The protein in the N-terminal section; belongs to the enoyl-CoA hydratase/isomerase family. This sequence in the C-terminal section; belongs to the 3-hydroxyacyl-CoA dehydrogenase family. Heterotetramer of two alpha chains (FadB) and two beta chains (FadA).

It carries out the reaction a (3S)-3-hydroxyacyl-CoA + NAD(+) = a 3-oxoacyl-CoA + NADH + H(+). The enzyme catalyses a (3S)-3-hydroxyacyl-CoA = a (2E)-enoyl-CoA + H2O. The catalysed reaction is a 4-saturated-(3S)-3-hydroxyacyl-CoA = a (3E)-enoyl-CoA + H2O. It catalyses the reaction (3S)-3-hydroxybutanoyl-CoA = (3R)-3-hydroxybutanoyl-CoA. It carries out the reaction a (3Z)-enoyl-CoA = a 4-saturated (2E)-enoyl-CoA. The enzyme catalyses a (3E)-enoyl-CoA = a 4-saturated (2E)-enoyl-CoA. Its pathway is lipid metabolism; fatty acid beta-oxidation. In terms of biological role, involved in the aerobic and anaerobic degradation of long-chain fatty acids via beta-oxidation cycle. Catalyzes the formation of 3-oxoacyl-CoA from enoyl-CoA via L-3-hydroxyacyl-CoA. It can also use D-3-hydroxyacyl-CoA and cis-3-enoyl-CoA as substrate. This chain is Fatty acid oxidation complex subunit alpha, found in Vibrio vulnificus (strain YJ016).